A 736-amino-acid chain; its full sequence is Polyribonucleotide nucleotidyltransferase (736 aa).

Mg(2+) contacts are provided by Asp-518 and Asp-524. The region spanning 584–644 is the KH domain; the sequence is PSLQIFSINP…QKVEAAKEHI (61 aa). An S1 motif domain is found at 665 to 732; the sequence is GEVFKGKVKK…NKNKVELGRA (68 aa).

Belongs to the polyribonucleotide nucleotidyltransferase family. Mg(2+) serves as cofactor.

The protein resides in the cytoplasm. The catalysed reaction is RNA(n+1) + phosphate = RNA(n) + a ribonucleoside 5'-diphosphate. Its function is as follows. Involved in mRNA degradation. Catalyzes the phosphorolysis of single-stranded polyribonucleotides processively in the 3'- to 5'-direction. This chain is Polyribonucleotide nucleotidyltransferase, found in Wolinella succinogenes (strain ATCC 29543 / DSM 1740 / CCUG 13145 / JCM 31913 / LMG 7466 / NCTC 11488 / FDC 602W) (Vibrio succinogenes).